Consider the following 231-residue polypeptide: Uracil phosphoribosyltransferase (231 aa).

38-42 (KGLVR) contacts GTP. Residues arginine 87, arginine 112, and 140-148 (DPMIATGST) contribute to the 5-phospho-alpha-D-ribose 1-diphosphate site. Residues isoleucine 203 and 208–210 (GDA) each bind uracil. Aspartate 209 contributes to the 5-phospho-alpha-D-ribose 1-diphosphate binding site.

The protein belongs to the UPRTase family. Mg(2+) serves as cofactor.

The enzyme catalyses UMP + diphosphate = 5-phospho-alpha-D-ribose 1-diphosphate + uracil. Its pathway is pyrimidine metabolism; UMP biosynthesis via salvage pathway; UMP from uracil: step 1/1. Allosterically activated by GTP. Functionally, catalyzes the conversion of uracil and 5-phospho-alpha-D-ribose 1-diphosphate (PRPP) to UMP and diphosphate. The polypeptide is Uracil phosphoribosyltransferase (Methanococcus maripaludis (strain C6 / ATCC BAA-1332)).